Reading from the N-terminus, the 176-residue chain is ATP-dependent protease subunit HslV (176 aa).

Residue T5 is part of the active site. Positions 161, 164, and 167 each coordinate Na(+).

This sequence belongs to the peptidase T1B family. HslV subfamily. A double ring-shaped homohexamer of HslV is capped on each side by a ring-shaped HslU homohexamer. The assembly of the HslU/HslV complex is dependent on binding of ATP.

The protein localises to the cytoplasm. The enzyme catalyses ATP-dependent cleavage of peptide bonds with broad specificity.. Its activity is regulated as follows. Allosterically activated by HslU binding. In terms of biological role, protease subunit of a proteasome-like degradation complex believed to be a general protein degrading machinery. The chain is ATP-dependent protease subunit HslV from Sulfurovum sp. (strain NBC37-1).